The chain runs to 272 residues: Putative pyruvate, phosphate dikinase regulatory protein (272 aa).

Residue 149–156 (GVSRTSKT) participates in ADP binding.

It belongs to the pyruvate, phosphate/water dikinase regulatory protein family. PDRP subfamily.

It catalyses the reaction N(tele)-phospho-L-histidyl/L-threonyl-[pyruvate, phosphate dikinase] + ADP = N(tele)-phospho-L-histidyl/O-phospho-L-threonyl-[pyruvate, phosphate dikinase] + AMP + H(+). The enzyme catalyses N(tele)-phospho-L-histidyl/O-phospho-L-threonyl-[pyruvate, phosphate dikinase] + phosphate + H(+) = N(tele)-phospho-L-histidyl/L-threonyl-[pyruvate, phosphate dikinase] + diphosphate. Functionally, bifunctional serine/threonine kinase and phosphorylase involved in the regulation of the pyruvate, phosphate dikinase (PPDK) by catalyzing its phosphorylation/dephosphorylation. The polypeptide is Putative pyruvate, phosphate dikinase regulatory protein (Lactiplantibacillus plantarum (strain ATCC BAA-793 / NCIMB 8826 / WCFS1) (Lactobacillus plantarum)).